Here is a 456-residue protein sequence, read N- to C-terminus: MSNSAMSVVILAAGKGTRMYSDLPKVLHKLAGKPMVQHVIDAAMTTGAQHVHLVYGHGGDLLKHELTDPALNWVLQAEQLGTGHAMQQAAPYFADDEDILMLYGDVPLISSQTLGRLRQTKPQGGIGLLTVKLDDPTGYGRIVRENGAVVGIVEHKDASEEQRQINEINTGILIANGKDLKRWLSQLNNNNAQGEFYITDIIAMAAEEGQRVEAVHPERLSEVEGVNNRLQLSALERVYQREQADRLLLAGVMLLDPARFDLRGELTHGRDVVIDVNVVVEGNVKLGNRVKIGAGCVIKNSIIGDDCEISPYSVLEDAVLDAECTVGPFARLRPGSELAEGAHVGNFVELKKARLGKGSKAGHLSYLGDADIGSGVNIGAGTITCNYDGANKHKTVIGDDVFVGSDSQLVAPVSVANGATIGAGTTVTHDVAENELVVGRVKQRHISGWQRPVKKK.

The interval Met1–Arg229 is pyrophosphorylase. Residues Leu11–Gly14, Lys25, Gln76, Gly81–Thr82, Tyr103–Asp105, Gly140, Glu154, Asn169, and Asn227 contribute to the UDP-N-acetyl-alpha-D-glucosamine site. Mg(2+) is bound at residue Asp105. Asn227 lines the Mg(2+) pocket. Positions Leu230–Ala250 are linker. Residues Gly251–Lys456 are N-acetyltransferase. 2 residues coordinate UDP-N-acetyl-alpha-D-glucosamine: Arg333 and Lys351. His363 acts as the Proton acceptor in catalysis. The UDP-N-acetyl-alpha-D-glucosamine site is built by Tyr366 and Asn377. Residues Ala380, Asn386–Tyr387, Ser405, Ala423, and Arg440 each bind acetyl-CoA.

This sequence in the N-terminal section; belongs to the N-acetylglucosamine-1-phosphate uridyltransferase family. It in the C-terminal section; belongs to the transferase hexapeptide repeat family. As to quaternary structure, homotrimer. It depends on Mg(2+) as a cofactor.

It localises to the cytoplasm. The catalysed reaction is alpha-D-glucosamine 1-phosphate + acetyl-CoA = N-acetyl-alpha-D-glucosamine 1-phosphate + CoA + H(+). The enzyme catalyses N-acetyl-alpha-D-glucosamine 1-phosphate + UTP + H(+) = UDP-N-acetyl-alpha-D-glucosamine + diphosphate. It participates in nucleotide-sugar biosynthesis; UDP-N-acetyl-alpha-D-glucosamine biosynthesis; N-acetyl-alpha-D-glucosamine 1-phosphate from alpha-D-glucosamine 6-phosphate (route II): step 2/2. It functions in the pathway nucleotide-sugar biosynthesis; UDP-N-acetyl-alpha-D-glucosamine biosynthesis; UDP-N-acetyl-alpha-D-glucosamine from N-acetyl-alpha-D-glucosamine 1-phosphate: step 1/1. Its pathway is bacterial outer membrane biogenesis; LPS lipid A biosynthesis. Functionally, catalyzes the last two sequential reactions in the de novo biosynthetic pathway for UDP-N-acetylglucosamine (UDP-GlcNAc). The C-terminal domain catalyzes the transfer of acetyl group from acetyl coenzyme A to glucosamine-1-phosphate (GlcN-1-P) to produce N-acetylglucosamine-1-phosphate (GlcNAc-1-P), which is converted into UDP-GlcNAc by the transfer of uridine 5-monophosphate (from uridine 5-triphosphate), a reaction catalyzed by the N-terminal domain. The polypeptide is Bifunctional protein GlmU (Pectobacterium carotovorum subsp. carotovorum (strain PC1)).